Consider the following 490-residue polypeptide: Myocilin (490 aa).

Residues methionine 1–alanine 18 form the signal peptide. Residues glycine 51–glutamine 170 are a coiled coil. Residues leucine 152–arginine 186 form a disordered region. The span at glutamine 173 to proline 182 shows a compositional bias: polar residues. In terms of domain architecture, Olfactomedin-like spans glycine 230 to arginine 489. Cysteine 231 and cysteine 419 are joined by a disulfide. Ca(2+) is bound by residues aspartate 366, asparagine 414, alanine 415, isoleucine 463, and aspartate 464. The Microbody targeting signal signature appears at serine 488–leucine 490.

In terms of assembly, homodimer (via N-terminus). Can also form higher oligomers. Interacts with OLFM3, FN1, NRCAM, GLDN and NFASC. Interacts (via N-terminus) with MYL2. Interacts with SFRP1, FRZB, FZD7, FZD10, FZD1 and WIF1; regulates Wnt signaling. Interacts with SNTA1; regulates muscle hypertrophy. Interacts with ERBB2 and ERBB3; activates ERBB2-ERBB3 signaling pathway. Interacts with SNCG; affects its secretion and its aggregation. In terms of processing, palmitoylated. Post-translationally, undergoes a calcium-dependent proteolytic cleavage at Gln-212 by CAPN2 in the endoplasmic reticulum. The result is the production of two fragments, one of 35 kDa containing the C-terminal olfactomedin-like domain, and another of 20 kDa containing the N-terminal leucine zipper-like domain. Glycosylated. The myocilin 35 kDa fragment is detected in iris and ciliary body.

The protein resides in the secreted. It localises to the golgi apparatus. The protein localises to the cytoplasmic vesicle. It is found in the extracellular space. Its subcellular location is the extracellular matrix. The protein resides in the extracellular exosome. It localises to the mitochondrion. The protein localises to the mitochondrion intermembrane space. It is found in the mitochondrion inner membrane. Its subcellular location is the mitochondrion outer membrane. The protein resides in the rough endoplasmic reticulum. It localises to the cell projection. The protein localises to the cilium. It is found in the endoplasmic reticulum. In terms of biological role, secreted glycoprotein regulating the activation of different signaling pathways in adjacent cells to control different processes including cell adhesion, cell-matrix adhesion, cytoskeleton organization and cell migration. Promotes substrate adhesion, spreading and formation of focal contacts. Negatively regulates cell-matrix adhesion and stress fiber assembly through Rho protein signal transduction. Modulates the organization of actin cytoskeleton by stimulating the formation of stress fibers through interactions with components of Wnt signaling pathways. Promotes cell migration through activation of PTK2 and the downstream phosphatidylinositol 3-kinase signaling. Plays a role in bone formation and promotes osteoblast differentiation in a dose-dependent manner through mitogen-activated protein kinase signaling. Mediates myelination in the peripheral nervous system through ERBB2/ERBB3 signaling. Plays a role as a regulator of muscle hypertrophy through the components of dystrophin-associated protein complex. Involved in positive regulation of mitochondrial depolarization. Plays a role in neurite outgrowth. May participate in the obstruction of fluid outflow in the trabecular meshwork. The chain is Myocilin (MYOC) from Bos taurus (Bovine).